A 277-amino-acid chain; its full sequence is MGLLECCARCLIGAPFASLVATGLCFFGVALFCGCGHEALTGTEQLIETYFSKNYQDYEYLIDVIHAFQYVIYGTASFFFLYGALLLAEGFYTTGAVRQIFGDYRTTICGKGLSATVTGGPKGRGARGPQRAHSLQRVCQCLGKWLGHPDKFVGITYVLTIVWLLAFACSAVPVYIYFNTWTTCQSIAFPTKTTASIGTLCADARMYGVLPWNAFPGKVCGSNLLSICKTSEFQMTFHLFIAAFVGAAATLVSLLTFMIAATYNFAVLKLMGRGTKF.

Residues 2-10 lie on the Cytoplasmic side of the membrane; sequence GLLECCARC. 3 S-palmitoyl cysteine lipidation sites follow: cysteine 6, cysteine 7, and cysteine 10. A helical membrane pass occupies residues 11–36; that stretch reads LIGAPFASLVATGLCFFGVALFCGCG. The Extracellular segment spans residues 37–59; the sequence is HEALTGTEQLIETYFSKNYQDYE. A helical transmembrane segment spans residues 60 to 88; the sequence is YLIDVIHAFQYVIYGTASFFFLYGALLLA. Topologically, residues 89–151 are cytoplasmic; sequence EGFYTTGAVR…LGKWLGHPDK (63 aa). 3 S-palmitoyl cysteine lipidation sites follow: cysteine 109, cysteine 139, and cysteine 141. The helical transmembrane segment at 152 to 178 threads the bilayer; that stretch reads FVGITYVLTIVWLLAFACSAVPVYIYF. Over 179-238 the chain is Extracellular; it reads NTWTTCQSIAFPTKTTASIGTLCADARMYGVLPWNAFPGKVCGSNLLSICKTSEFQMTFH. 2 disulfide bridges follow: cysteine 184–cysteine 228 and cysteine 201–cysteine 220. Residue threonine 199 is the site of O-palmitoyl threonine attachment. Residues 239–268 form a helical membrane-spanning segment; sequence LFIAAFVGAAATLVSLLTFMIAATYNFAVL. Residues 269–277 lie on the Cytoplasmic side of the membrane; it reads KLMGRGTKF.

The protein belongs to the myelin proteolipid protein family.

The protein localises to the cell membrane. In terms of biological role, this is the major myelin protein from the central nervous system. It plays an important role in the formation or maintenance of the multilamellar structure of myelin. The polypeptide is Myelin proteolipid protein (PLP1) (Gallus gallus (Chicken)).